Consider the following 846-residue polypeptide: Translation initiation factor IF-2 (846 aa).

A disordered region spans residues 199-219; sequence KREEEEKKSKAKKAGGKGFKK. Basic residues predominate over residues 207–219; sequence SKAKKAGGKGFKK. The tr-type G domain maps to 345–512; the sequence is SRAPVVTIMG…AVLLQSEVLE (168 aa). The tract at residues 354 to 361 is G1; sequence GHVDHGKT. 354–361 is a binding site for GTP; the sequence is GHVDHGKT. Residues 379-383 form a G2 region; that stretch reads GITQH. The tract at residues 400–403 is G3; it reads DTPG. Residues 400–404 and 454–457 contribute to the GTP site; these read DTPGH and NKID. Residues 454–457 are G4; sequence NKID. Residues 490–492 form a G5 region; sequence SAK.

Belongs to the TRAFAC class translation factor GTPase superfamily. Classic translation factor GTPase family. IF-2 subfamily.

Its subcellular location is the cytoplasm. One of the essential components for the initiation of protein synthesis. Protects formylmethionyl-tRNA from spontaneous hydrolysis and promotes its binding to the 30S ribosomal subunits. Also involved in the hydrolysis of GTP during the formation of the 70S ribosomal complex. This Francisella tularensis subsp. holarctica (strain LVS) protein is Translation initiation factor IF-2.